The sequence spans 237 residues: MANPYFQFKKFTVWHDKCAMKVGTDGVLLGAWASTERCQRILDVGTGTGLIALMLAQRSTAILDAIDIDSDACLQAQENIAKSPFANRIQVYQTSLSEYMPDENIKYDLIVSNPPYFIDSLKCPDTKRNLARHTDTLSLPDLLRDSRKLLAPEGNIALVLPFEQRESLIDIAREESLSPSREAHVSPIPDAPPKRLLIELSATPVAKPKSSHLTLEIERHRYSEEFTAIAKDFYLKM.

It belongs to the methyltransferase superfamily. tRNA (adenine-N(6)-)-methyltransferase family.

It localises to the cytoplasm. It carries out the reaction adenosine(37) in tRNA1(Val) + S-adenosyl-L-methionine = N(6)-methyladenosine(37) in tRNA1(Val) + S-adenosyl-L-homocysteine + H(+). In terms of biological role, specifically methylates the adenine in position 37 of tRNA(1)(Val) (anticodon cmo5UAC). This chain is tRNA1(Val) (adenine(37)-N6)-methyltransferase, found in Parabacteroides distasonis (strain ATCC 8503 / DSM 20701 / CIP 104284 / JCM 5825 / NCTC 11152).